Here is a 172-residue protein sequence, read N- to C-terminus: MPLLDSFTVDHTRMNAPAVRVAKTMQTPKGDTITVFDLRFCRPNMDILSERGIHTLEHLYAGFMRNHLNSERVEIIDISPMGCRTGFYMSLIGTPSEQDVAAGWTAAMEDVLNVESQDQIPELNEYQCGTYSMHSLEEAKDIAKTILAEGINVNKNDELALPESMLKELDVK.

Fe cation is bound by residues His54, His58, and Cys128.

It belongs to the LuxS family. In terms of assembly, homodimer. Requires Fe cation as cofactor.

The enzyme catalyses S-(5-deoxy-D-ribos-5-yl)-L-homocysteine = (S)-4,5-dihydroxypentane-2,3-dione + L-homocysteine. Its function is as follows. Involved in the synthesis of autoinducer 2 (AI-2) which is secreted by bacteria and is used to communicate both the cell density and the metabolic potential of the environment. The regulation of gene expression in response to changes in cell density is called quorum sensing. Catalyzes the transformation of S-ribosylhomocysteine (RHC) to homocysteine (HC) and 4,5-dihydroxy-2,3-pentadione (DPD). This chain is S-ribosylhomocysteine lyase, found in Photobacterium profundum (strain SS9).